Here is a 384-residue protein sequence, read N- to C-terminus: Calreticulin-3 (384 aa).

Positions 1-19 (MARALVQLWAICMLRVALA) are cleaved as a signal peptide. The interval 20-197 (TVYFQEEFLD…GQSIESGSIE (178 aa)) is N-domain. N-linked (GlcNAc...) asparagine glycosylation is present at Asn42. Cysteines 105 and 137 form a disulfide. An alpha-D-glucoside contacts are provided by Tyr109, Lys111, Tyr128, and Asp135. Repeat copies occupy residues 191-202 (IESGSIEYDWNL), 208-219 (ETSPAESKDWEQ), 221-230 (KDNKAQDWEK), 234-245 (DASTSKQSDWNG), 249-259 (GDWPAPMLQKP), 263-271 (DGLKPEGIH), and 273-283 (DVWLHRKMKNT). Residues 191–245 (IESGSIEYDWNLTSLKKETSPAESKDWEQTKDNKAQDWEKHFLDASTSKQSDWNG) are 4 X approximate repeats. Positions 198–294 (YDWNLTSLKK…YLTQYDLSEF (97 aa)) are P-domain. A glycan (N-linked (GlcNAc...) asparagine) is linked at Asn201. The segment at 249–283 (GDWPAPMLQKPPYQDGLKPEGIHKDVWLHRKMKNT) is 3 X approximate repeats. The tract at residues 295-384 (ENIGAIGLEL…FNQFHRRNEL (90 aa)) is C-domain. Glu303 serves as a coordination point for an alpha-D-glucoside. Residues 381–384 (RNEL) carry the Prevents secretion from ER motif.

This sequence belongs to the calreticulin family. In terms of assembly, component of an EIF2 complex at least composed of CELF1/CUGBP1, CALR, CALR3, EIF2S1, EIF2S2, HSP90B1 and HSPA5. As to expression, testis specific.

The protein resides in the endoplasmic reticulum lumen. Functionally, during spermatogenesis, may act as a lectin-independent chaperone for specific client proteins such as ADAM3. Required for sperm fertility. CALR3 capacity for calcium-binding may be absent or much lower than that of CALR. The chain is Calreticulin-3 (CALR3) from Homo sapiens (Human).